The following is a 336-amino-acid chain: Acyl-CoA-binding domain-containing protein 4 (336 aa).

The helical; Signal-anchor transmembrane segment at 12–32 threads the bilayer; the sequence is AVIGLLFAFLVAKLISTVIAF. The interval 40–88 is disordered; the sequence is TRSTPTSPSAADTPAAPAPPPASLDGGHGDTSDGSGSDSDSDWEGVEST. A compositionally biased stretch (low complexity) spans 42-54; sequence STPTSPSAADTPA. Residues 78–88 are compositionally biased toward acidic residues; it reads SDSDWEGVEST. Residues 90–178 form the ACB domain; sequence LDEEFSAASA…VDELFPNWSM (89 aa). An acyl-CoA-binding positions include 120 to 124, Lys-142, Lys-146, and Tyr-165; that span reads YGLYK. The N-linked (GlcNAc...) asparagine glycan is linked to Asn-175. The disordered stretch occupies residues 179-202; that stretch reads GSSTKRKDEDTTVSASSSKGPMGP. Asn-216 carries an N-linked (GlcNAc...) asparagine glycan. ANK repeat units follow at residues 251 to 280 and 284 to 313; these read EGRT…DVNA and EGQT…DVQI.

It belongs to the ACBP family. In terms of tissue distribution, highly expressed in leaves. Expressed at low levels in roots and seeds.

Its subcellular location is the endoplasmic reticulum membrane. Functionally, binds medium- and long-chain acyl-CoA esters with high affinity. Can interact in vitro with palmitoyl-CoA, linoleoyl-CoA and linolenoyl-CoA. Binds phosphatidic acid (PA) and phosphatidylcholine (PC) in vitro. May play a role in the biosynthesis of phospholipids. This is Acyl-CoA-binding domain-containing protein 4 from Oryza sativa subsp. japonica (Rice).